Reading from the N-terminus, the 113-residue chain is Ig kappa chain V-II region 7S34.1 (113 aa).

The interval aspartate 1 to cysteine 23 is framework-1. Cysteine 23 and cysteine 93 are joined by a disulfide. Residues arginine 24–tyrosine 39 are complementarity-determining-1. The segment at tryptophan 40 to tyrosine 54 is framework-2. A complementarity-determining-2 region spans residues arginine 55–serine 61. Positions glycine 62–cysteine 93 are framework-3. The segment at methionine 94–threonine 102 is complementarity-determining-3. The tract at residues phenylalanine 103–lysine 112 is framework-4.

This Mus musculus (Mouse) protein is Ig kappa chain V-II region 7S34.1.